A 211-amino-acid polypeptide reads, in one-letter code: Ribosomal RNA small subunit methyltransferase G (211 aa).

S-adenosyl-L-methionine contacts are provided by residues glycine 74, leucine 79, 125–126, and arginine 140; that span reads AE.

It belongs to the methyltransferase superfamily. RNA methyltransferase RsmG family.

The protein resides in the cytoplasm. In terms of biological role, specifically methylates the N7 position of guanine in position 518 of 16S rRNA. In Clavibacter michiganensis subsp. michiganensis (strain NCPPB 382), this protein is Ribosomal RNA small subunit methyltransferase G.